The chain runs to 363 residues: Putative lipoate-protein ligase A (363 aa).

The region spanning 49 to 229 is the BPL/LPL catalytic domain; the sequence is STAKHCLLLY…CFLLHKSHST (181 aa). Residues arginine 91, 96–99, and lysine 152 contribute to the ATP site; that span reads GTVF. Position 152 (lysine 152) interacts with (R)-lipoate.

It belongs to the LplA family. As to quaternary structure, monomer.

The protein resides in the cytoplasm. It catalyses the reaction L-lysyl-[lipoyl-carrier protein] + (R)-lipoate + ATP = N(6)-[(R)-lipoyl]-L-lysyl-[lipoyl-carrier protein] + AMP + diphosphate + H(+). It participates in protein modification; protein lipoylation via exogenous pathway; protein N(6)-(lipoyl)lysine from lipoate: step 1/2. The protein operates within protein modification; protein lipoylation via exogenous pathway; protein N(6)-(lipoyl)lysine from lipoate: step 2/2. Catalyzes both the ATP-dependent activation of exogenously supplied lipoate to lipoyl-AMP and the transfer of the activated lipoyl onto the lipoyl domains of lipoate-dependent enzymes. The protein is Putative lipoate-protein ligase A (aim22) of Schizosaccharomyces pombe (strain 972 / ATCC 24843) (Fission yeast).